Consider the following 421-residue polypeptide: MDKLIITGGARLDGEIRISGAKNAALPILAATLLADGPVTVGNLPHLHDITTMIELFGRMGIEPVIDEKLSVEIDPRTIKTLVAPYELVKTMRASILVLGPMVARFGEAEVALPGGCAIGSRPVDLHIRGLEAMGAKIEVEGGYIKAKAPEGGLRGAHFFFDTVSVTGTENIMMAAALAKGRSVLQNAAREPEVVDLANFINAMGGNVQGAGTDTITIDGVERLHSANYRVMPDRIETGTYLVAAAVTGGRVKVKDTDPTILEAVLEKLKEAGADINTGEDWIELDMHGKRPKAVNLRTAPYPAFPTDMQAQFISLNAIAEGTGAVIETIFENRFMHVYEMHRMGAQIQVEGNTAIVTGVKALKGAPVMATDLRASASLVLSALVAEGDTLIDRIYHIDRGYECIEEKLQMLGAKIRRVPG.

22-23 (KN) contacts phosphoenolpyruvate. Position 93 (Arg93) interacts with UDP-N-acetyl-alpha-D-glucosamine. Cys117 serves as the catalytic Proton donor. The residue at position 117 (Cys117) is a 2-(S-cysteinyl)pyruvic acid O-phosphothioketal. UDP-N-acetyl-alpha-D-glucosamine-binding positions include 122–126 (RPVDL), Asp308, and Ile330.

This sequence belongs to the EPSP synthase family. MurA subfamily.

Its subcellular location is the cytoplasm. The enzyme catalyses phosphoenolpyruvate + UDP-N-acetyl-alpha-D-glucosamine = UDP-N-acetyl-3-O-(1-carboxyvinyl)-alpha-D-glucosamine + phosphate. The protein operates within cell wall biogenesis; peptidoglycan biosynthesis. In terms of biological role, cell wall formation. Adds enolpyruvyl to UDP-N-acetylglucosamine. This chain is UDP-N-acetylglucosamine 1-carboxyvinyltransferase, found in Pseudomonas putida (strain GB-1).